Here is a 485-residue protein sequence, read N- to C-terminus: Glutamyl-tRNA(Gln) amidotransferase subunit A (485 aa).

Active-site charge relay system residues include K79 and S154. S178 functions as the Acyl-ester intermediate in the catalytic mechanism.

It belongs to the amidase family. GatA subfamily. As to quaternary structure, heterotrimer of A, B and C subunits.

It catalyses the reaction L-glutamyl-tRNA(Gln) + L-glutamine + ATP + H2O = L-glutaminyl-tRNA(Gln) + L-glutamate + ADP + phosphate + H(+). In terms of biological role, allows the formation of correctly charged Gln-tRNA(Gln) through the transamidation of misacylated Glu-tRNA(Gln) in organisms which lack glutaminyl-tRNA synthetase. The reaction takes place in the presence of glutamine and ATP through an activated gamma-phospho-Glu-tRNA(Gln). This chain is Glutamyl-tRNA(Gln) amidotransferase subunit A, found in Desulforamulus reducens (strain ATCC BAA-1160 / DSM 100696 / MI-1) (Desulfotomaculum reducens).